A 223-amino-acid polypeptide reads, in one-letter code: RNA-free ribonuclease P (223 aa).

The protein belongs to the HARP family.

It catalyses the reaction Endonucleolytic cleavage of RNA, removing 5'-extranucleotides from tRNA precursor.. RNA-free RNase P that catalyzes the removal of the 5'-leader sequence from pre-tRNA to produce the mature 5'-terminus. This is RNA-free ribonuclease P from Methanococcus maripaludis (strain C6 / ATCC BAA-1332).